The chain runs to 507 residues: Sulfatase (507 aa).

A signal peptide spans 1 to 18; the sequence is MKTRYFLLLGICMLSCRT. Ca(2+) is bound by residues aspartate 39, aspartate 40, and cysteine 79. The active-site Nucleophile is the cysteine 79. At cysteine 79 the chain carries 3-oxoalanine (Cys). Histidine 139 is a catalytic residue. Aspartate 325 and histidine 326 together coordinate Ca(2+).

The protein belongs to the sulfatase family. Requires Ca(2+) as cofactor. In terms of processing, the conversion to 3-oxoalanine (also known as C-formylglycine, FGly), of a serine or cysteine residue in prokaryotes and of a cysteine residue in eukaryotes, is critical for catalytic activity. This post-translational modification is severely defective in multiple sulfatase deficiency (MSD).

It is found in the periplasm. Sulfatase that may be involved in ulvan degradation. Ulvan is the main polysaccharide component of the Ulvales (green seaweed) cell wall. It is composed of disaccharide building blocks comprising 3-sulfated rhamnose (Rha3S) linked to D-glucuronic acid (GlcA), L-iduronic acid (IduA), or D-xylose (Xyl). Has no activity on different ulvan polymers. In Formosa agariphila (strain DSM 15362 / KCTC 12365 / LMG 23005 / KMM 3901 / M-2Alg 35-1), this protein is Sulfatase.